A 193-amino-acid chain; its full sequence is Adenylate kinase (193 aa).

Position 10–18 (10–18 (GVPGVGGTT)) interacts with ATP.

Belongs to the archaeal adenylate kinase family. As to quaternary structure, monomer.

It localises to the cytoplasm. It carries out the reaction AMP + ATP = 2 ADP. The protein is Adenylate kinase of Methanococcus aeolicus (strain ATCC BAA-1280 / DSM 17508 / OCM 812 / Nankai-3).